The chain runs to 347 residues: NADH-ubiquinone oxidoreductase chain 2 (347 aa).

10 consecutive transmembrane segments (helical) span residues 13–33 (IFAG…WVGL), 55–75 (AAIK…MAIL), 96–116 (LMIM…FWVP), 123–143 (PLMS…SIMY), 149–169 (LNVN…SWGG), 178–198 (ILAY…PYNP), 201–221 (TILN…LLNL), 247–267 (TLLS…WVII), 274–294 (NSLI…YFYL), and 326–346 (LPTL…MLMI).

It belongs to the complex I subunit 2 family. As to quaternary structure, core subunit of respiratory chain NADH dehydrogenase (Complex I) which is composed of 45 different subunits. Interacts with TMEM242.

It localises to the mitochondrion inner membrane. It carries out the reaction a ubiquinone + NADH + 5 H(+)(in) = a ubiquinol + NAD(+) + 4 H(+)(out). Core subunit of the mitochondrial membrane respiratory chain NADH dehydrogenase (Complex I) which catalyzes electron transfer from NADH through the respiratory chain, using ubiquinone as an electron acceptor. Essential for the catalytic activity and assembly of complex I. The polypeptide is NADH-ubiquinone oxidoreductase chain 2 (Pan paniscus (Pygmy chimpanzee)).